Consider the following 804-residue polypeptide: DNA gyrase subunit B (804 aa).

Residues 431 to 546 form the Toprim domain; that stretch reads CEMYIVEGDS…NGCVYIAQPP (116 aa). Positions 437, 511, and 513 each coordinate Mg(2+).

The protein belongs to the type II topoisomerase GyrB family. Heterotetramer, composed of two GyrA and two GyrB chains. In the heterotetramer, GyrA contains the active site tyrosine that forms a transient covalent intermediate with DNA, while GyrB binds cofactors and catalyzes ATP hydrolysis. Mg(2+) is required as a cofactor. It depends on Mn(2+) as a cofactor. The cofactor is Ca(2+).

The protein resides in the cytoplasm. It catalyses the reaction ATP-dependent breakage, passage and rejoining of double-stranded DNA.. A type II topoisomerase that negatively supercoils closed circular double-stranded (ds) DNA in an ATP-dependent manner to modulate DNA topology and maintain chromosomes in an underwound state. Negative supercoiling favors strand separation, and DNA replication, transcription, recombination and repair, all of which involve strand separation. Also able to catalyze the interconversion of other topological isomers of dsDNA rings, including catenanes and knotted rings. Type II topoisomerases break and join 2 DNA strands simultaneously in an ATP-dependent manner. This chain is DNA gyrase subunit B, found in Chlamydia muridarum (strain MoPn / Nigg).